Consider the following 143-residue polypeptide: Nucleoside diphosphate kinase 2 (143 aa).

Lys11, Phe59, Arg87, Thr93, Arg104, and Asn114 together coordinate ATP. The active-site Pros-phosphohistidine intermediate is the His117.

It belongs to the NDK family. Homotetramer. Requires Mg(2+) as cofactor.

The protein localises to the cytoplasm. The catalysed reaction is a 2'-deoxyribonucleoside 5'-diphosphate + ATP = a 2'-deoxyribonucleoside 5'-triphosphate + ADP. It catalyses the reaction a ribonucleoside 5'-diphosphate + ATP = a ribonucleoside 5'-triphosphate + ADP. Its function is as follows. Major role in the synthesis of nucleoside triphosphates other than ATP. The ATP gamma phosphate is transferred to the NDP beta phosphate via a ping-pong mechanism, using a phosphorylated active-site intermediate. This Protochlamydia amoebophila (strain UWE25) protein is Nucleoside diphosphate kinase 2.